Reading from the N-terminus, the 179-residue chain is Peptidyl-tRNA hydrolase (179 aa).

Y14 contributes to the tRNA binding site. H19 serves as the catalytic Proton acceptor. 3 residues coordinate tRNA: Y60, N62, and N108.

Belongs to the PTH family. As to quaternary structure, monomer.

It localises to the cytoplasm. The enzyme catalyses an N-acyl-L-alpha-aminoacyl-tRNA + H2O = an N-acyl-L-amino acid + a tRNA + H(+). Hydrolyzes ribosome-free peptidyl-tRNAs (with 1 or more amino acids incorporated), which drop off the ribosome during protein synthesis, or as a result of ribosome stalling. Functionally, catalyzes the release of premature peptidyl moieties from peptidyl-tRNA molecules trapped in stalled 50S ribosomal subunits, and thus maintains levels of free tRNAs and 50S ribosomes. This Mycoplasma mobile (strain ATCC 43663 / 163K / NCTC 11711) (Mesomycoplasma mobile) protein is Peptidyl-tRNA hydrolase.